The chain runs to 510 residues: Maturase K (510 aa).

The protein belongs to the intron maturase 2 family. MatK subfamily.

It localises to the plastid. The protein localises to the chloroplast. Usually encoded in the trnK tRNA gene intron. Probably assists in splicing its own and other chloroplast group II introns. The polypeptide is Maturase K (Penstemon heterophyllus (Foothill penstemon)).